The chain runs to 496 residues: Glutathione reductase, cytosolic (496 aa).

FAD-binding residues include Ser-32, Gly-33, Glu-52, Thr-69, Cys-70, and Lys-78. Ser-32 contributes to the glutathione binding site. Cys-70 and Cys-75 are disulfide-bonded. Tyr-127 serves as a coordination point for glutathione. Gly-143 contacts FAD. 6 residues coordinate NADP(+): Gly-208, Ile-211, Glu-214, Arg-231, Arg-237, and Gly-294. 2 residues coordinate FAD: Asp-335 and Thr-343. Ala-373 is an NADP(+) binding site. His-469 lines the FAD pocket. His-469 acts as the Proton acceptor in catalysis.

It belongs to the class-I pyridine nucleotide-disulfide oxidoreductase family. Homodimer. FAD is required as a cofactor.

The protein localises to the cytoplasm. The enzyme catalyses 2 glutathione + NADP(+) = glutathione disulfide + NADPH + H(+). Catalyzes the reduction of glutathione disulfide (GSSG) to reduced glutathione (GSH). Constitutes the major mechanism to maintain a high GSH:GSSG ratio in the cytosol. The chain is Glutathione reductase, cytosolic (GRC2) from Oryza sativa subsp. japonica (Rice).